The primary structure comprises 256 residues: Ribosomal RNA small subunit methyltransferase J (256 aa).

S-adenosyl-L-methionine is bound by residues 101 to 102 (RD), 117 to 118 (ER), 153 to 154 (SS), and aspartate 176.

Belongs to the methyltransferase superfamily. RsmJ family.

The protein localises to the cytoplasm. The catalysed reaction is guanosine(1516) in 16S rRNA + S-adenosyl-L-methionine = N(2)-methylguanosine(1516) in 16S rRNA + S-adenosyl-L-homocysteine + H(+). Specifically methylates the guanosine in position 1516 of 16S rRNA. The chain is Ribosomal RNA small subunit methyltransferase J from Photobacterium profundum (strain SS9).